Reading from the N-terminus, the 109-residue chain is Ferredoxin (109 aa).

2 4Fe-4S ferredoxin-type domains span residues 2 to 30 and 31 to 60; these read TYVVTDECVKCKYTDCVEVCPVDCFYEGE and FMLVINPDECIDCGVCVPDCPIDAIKPESP. The [3Fe-4S] cluster site is built by cysteine 9 and cysteine 17. Residues cysteine 21, cysteine 40, cysteine 43, and cysteine 46 each coordinate [4Fe-4S] cluster. Cysteine 50 serves as a coordination point for [3Fe-4S] cluster.

Requires [4Fe-4S] cluster as cofactor. [3Fe-4S] cluster is required as a cofactor.

Its function is as follows. Ferredoxins are iron-sulfur proteins that transfer electrons in a wide variety of metabolic reactions. This Rickettsia prowazekii (strain Madrid E) protein is Ferredoxin (fdxA).